Consider the following 186-residue polypeptide: Elongation factor P (186 aa).

The protein belongs to the elongation factor P family.

Its subcellular location is the cytoplasm. It participates in protein biosynthesis; polypeptide chain elongation. In terms of biological role, involved in peptide bond synthesis. Stimulates efficient translation and peptide-bond synthesis on native or reconstituted 70S ribosomes in vitro. Probably functions indirectly by altering the affinity of the ribosome for aminoacyl-tRNA, thus increasing their reactivity as acceptors for peptidyl transferase. The polypeptide is Elongation factor P (Mycoplasmopsis synoviae (strain 53) (Mycoplasma synoviae)).